The sequence spans 362 residues: Chorismate synthase (362 aa).

Position 46 (R46) interacts with NADP(+). Residues 122–124 (RSS), 238–239 (NA), G278, 293–297 (KPTPS), and R319 each bind FMN.

This sequence belongs to the chorismate synthase family. Homotetramer. FMNH2 serves as cofactor.

The catalysed reaction is 5-O-(1-carboxyvinyl)-3-phosphoshikimate = chorismate + phosphate. It functions in the pathway metabolic intermediate biosynthesis; chorismate biosynthesis; chorismate from D-erythrose 4-phosphate and phosphoenolpyruvate: step 7/7. Its function is as follows. Catalyzes the anti-1,4-elimination of the C-3 phosphate and the C-6 proR hydrogen from 5-enolpyruvylshikimate-3-phosphate (EPSP) to yield chorismate, which is the branch point compound that serves as the starting substrate for the three terminal pathways of aromatic amino acid biosynthesis. This reaction introduces a second double bond into the aromatic ring system. The protein is Chorismate synthase of Campylobacter jejuni (strain RM1221).